We begin with the raw amino-acid sequence, 321 residues long: Cytochrome f (321 aa).

The N-terminal stretch at 1 to 35 is a signal peptide; the sequence is MQNRKTYDDWVKKWITQSISVLIMIDIMTRTSIAN. 4 residues coordinate heme: Tyr37, Cys57, Cys60, and His61. A helical transmembrane segment spans residues 287 to 307; sequence VQGLLLFLASVVLAQIFLVLK.

The protein belongs to the cytochrome f family. In terms of assembly, the 4 large subunits of the cytochrome b6-f complex are cytochrome b6, subunit IV (17 kDa polypeptide, petD), cytochrome f and the Rieske protein, while the 4 small subunits are PetG, PetL, PetM and PetN. The complex functions as a dimer. The cofactor is heme.

The protein resides in the plastid. The protein localises to the chloroplast thylakoid membrane. Functionally, component of the cytochrome b6-f complex, which mediates electron transfer between photosystem II (PSII) and photosystem I (PSI), cyclic electron flow around PSI, and state transitions. In Cryptomeria japonica (Japanese cedar), this protein is Cytochrome f.